Reading from the N-terminus, the 420-residue chain is MDGTDVTMLMREIGIRARAAAAELAFAEPSRKEEALNAAAEAMLARSDEILEANGRDLAFGAEKGLTPAMMDRLKLDAARIDGIVEGLRAVAGQPDPVGQVIAEWDRPSGLHIRRVRTPLGVVGVIYESRPNVTADAGALCLKSGNAVILRGGSESFHSSGAIHAALQDGLRQAGLPVDAIQRVPTRDRAAVAEMLRMVEHIDVIVPRGGKGLVGLVQAEARVPVFAHLEGICHVYADGDADLEKARRVVLNAKTRRTGICGSAECLLIDRAFLAKHGPVLIEDLLKAGVEVRAEGELAEVPGTVPAQPEDFGREFLDMIIAAKVVGGVDEAIAHIRRYGSSHTESILTENDATAERFFRRLDSAILMRNASTQFADGGEFGMGAEIGIATGKMHARGPVGAEQLTSFKYLVTGDGTIRA.

Belongs to the gamma-glutamyl phosphate reductase family.

It localises to the cytoplasm. The enzyme catalyses L-glutamate 5-semialdehyde + phosphate + NADP(+) = L-glutamyl 5-phosphate + NADPH + H(+). It functions in the pathway amino-acid biosynthesis; L-proline biosynthesis; L-glutamate 5-semialdehyde from L-glutamate: step 2/2. Catalyzes the NADPH-dependent reduction of L-glutamate 5-phosphate into L-glutamate 5-semialdehyde and phosphate. The product spontaneously undergoes cyclization to form 1-pyrroline-5-carboxylate. This is Gamma-glutamyl phosphate reductase from Cereibacter sphaeroides (strain KD131 / KCTC 12085) (Rhodobacter sphaeroides).